The primary structure comprises 137 residues: Lysozyme (137 aa).

Residues 1-18 (MQKLIIFALVVLCVGSEA) form the signal peptide. A C-type lysozyme domain is found at 19–137 (KTFTRCGLVH…QGSLPDISSC (119 aa)). Intrachain disulfides connect C24–C137, C45–C127, C79–C93, and C89–C107. Active-site residues include E50 and D67.

The protein belongs to the glycosyl hydrolase 22 family.

The enzyme catalyses Hydrolysis of (1-&gt;4)-beta-linkages between N-acetylmuramic acid and N-acetyl-D-glucosamine residues in a peptidoglycan and between N-acetyl-D-glucosamine residues in chitodextrins.. In terms of biological role, lysozymes have primarily a bacteriolytic function; those in tissues and body fluids are associated with the monocyte-macrophage system and enhance the activity of immunoagents. Active against E.coli and M.luteus. This is Lysozyme from Bombyx mori (Silk moth).